The chain runs to 99 residues: Integration host factor subunit alpha (99 aa).

The tract at residues 49 to 75 is disordered; the sequence is FGNFDLRDKNQRPGRNPKTGEDIPITA.

It belongs to the bacterial histone-like protein family. In terms of assembly, heterodimer of an alpha and a beta chain.

This protein is one of the two subunits of integration host factor, a specific DNA-binding protein that functions in genetic recombination as well as in transcriptional and translational control. The sequence is that of Integration host factor subunit alpha from Salmonella agona (strain SL483).